We begin with the raw amino-acid sequence, 598 residues long: UvrABC system protein C (598 aa).

The GIY-YIG domain occupies 14–91 (DSPGCYLHKD…IQKNMPKYNI (78 aa)). Positions 196-231 (DKIIEDLRSKMLAASEEMAFERAAEYRDLISGIATM) constitute a UVR domain.

It belongs to the UvrC family. As to quaternary structure, interacts with UvrB in an incision complex.

The protein resides in the cytoplasm. Functionally, the UvrABC repair system catalyzes the recognition and processing of DNA lesions. UvrC both incises the 5' and 3' sides of the lesion. The N-terminal half is responsible for the 3' incision and the C-terminal half is responsible for the 5' incision. The sequence is that of UvrABC system protein C from Streptococcus pyogenes serotype M12 (strain MGAS2096).